A 145-amino-acid polypeptide reads, in one-letter code: D-aminoacyl-tRNA deacylase (145 aa).

The Gly-cisPro motif, important for rejection of L-amino acids signature appears at 137 to 138 (GP).

The protein belongs to the DTD family. As to quaternary structure, homodimer.

The protein localises to the cytoplasm. It catalyses the reaction glycyl-tRNA(Ala) + H2O = tRNA(Ala) + glycine + H(+). The enzyme catalyses a D-aminoacyl-tRNA + H2O = a tRNA + a D-alpha-amino acid + H(+). In terms of biological role, an aminoacyl-tRNA editing enzyme that deacylates mischarged D-aminoacyl-tRNAs. Also deacylates mischarged glycyl-tRNA(Ala), protecting cells against glycine mischarging by AlaRS. Acts via tRNA-based rather than protein-based catalysis; rejects L-amino acids rather than detecting D-amino acids in the active site. By recycling D-aminoacyl-tRNA to D-amino acids and free tRNA molecules, this enzyme counteracts the toxicity associated with the formation of D-aminoacyl-tRNA entities in vivo and helps enforce protein L-homochirality. This is D-aminoacyl-tRNA deacylase from Shewanella putrefaciens (strain CN-32 / ATCC BAA-453).